The primary structure comprises 405 residues: Arginine biosynthesis bifunctional protein ArgJ (405 aa).

The substrate site is built by threonine 152, lysine 178, threonine 189, glutamate 276, asparagine 400, and threonine 405. Threonine 189 (nucleophile) is an active-site residue.

The protein belongs to the ArgJ family. In terms of assembly, heterotetramer of two alpha and two beta chains.

It is found in the cytoplasm. The catalysed reaction is N(2)-acetyl-L-ornithine + L-glutamate = N-acetyl-L-glutamate + L-ornithine. It catalyses the reaction L-glutamate + acetyl-CoA = N-acetyl-L-glutamate + CoA + H(+). The protein operates within amino-acid biosynthesis; L-arginine biosynthesis; L-ornithine and N-acetyl-L-glutamate from L-glutamate and N(2)-acetyl-L-ornithine (cyclic): step 1/1. It functions in the pathway amino-acid biosynthesis; L-arginine biosynthesis; N(2)-acetyl-L-ornithine from L-glutamate: step 1/4. In terms of biological role, catalyzes two activities which are involved in the cyclic version of arginine biosynthesis: the synthesis of N-acetylglutamate from glutamate and acetyl-CoA as the acetyl donor, and of ornithine by transacetylation between N(2)-acetylornithine and glutamate. The sequence is that of Arginine biosynthesis bifunctional protein ArgJ from Pseudomonas putida (strain ATCC 47054 / DSM 6125 / CFBP 8728 / NCIMB 11950 / KT2440).